The following is a 65-amino-acid chain: Photosystem II reaction center protein J (65 aa).

Residues 35–55 (LWLVATAGGTAVIFVLGIFFY) form a helical membrane-spanning segment.

It belongs to the PsbJ family. PSII is composed of 1 copy each of membrane proteins PsbA, PsbB, PsbC, PsbD, PsbE, PsbF, PsbH, PsbI, PsbJ, PsbK, PsbL, PsbM, PsbT, PsbX, PsbY, Psb30/Ycf12, peripheral proteins PsbO, CyanoQ (PsbQ), PsbU, PsbV and a large number of cofactors. It forms dimeric complexes.

The protein localises to the cellular thylakoid membrane. One of the components of the core complex of photosystem II (PSII). PSII is a light-driven water:plastoquinone oxidoreductase that uses light energy to abstract electrons from H(2)O, generating O(2) and a proton gradient subsequently used for ATP formation. It consists of a core antenna complex that captures photons, and an electron transfer chain that converts photonic excitation into a charge separation. This is Photosystem II reaction center protein J from Prochlorococcus marinus (strain NATL2A).